Reading from the N-terminus, the 99-residue chain is UPF0320 protein YER188C-A (99 aa).

It belongs to the UPF0320 family.

This chain is UPF0320 protein YER188C-A, found in Saccharomyces cerevisiae (strain ATCC 204508 / S288c) (Baker's yeast).